The primary structure comprises 276 residues: NH(3)-dependent NAD(+) synthetase (276 aa).

43 to 50 (GISGGVDS) contacts ATP. A Mg(2+)-binding site is contributed by aspartate 49. A deamido-NAD(+)-binding site is contributed by arginine 146. Threonine 166 contacts ATP. Position 171 (glutamate 171) interacts with Mg(2+). Residues lysine 179 and aspartate 186 each coordinate deamido-NAD(+). ATP is bound by residues lysine 195 and threonine 217. Deamido-NAD(+) is bound at residue 266–267 (HK).

It belongs to the NAD synthetase family. Homodimer.

The catalysed reaction is deamido-NAD(+) + NH4(+) + ATP = AMP + diphosphate + NAD(+) + H(+). It functions in the pathway cofactor biosynthesis; NAD(+) biosynthesis; NAD(+) from deamido-NAD(+) (ammonia route): step 1/1. Catalyzes the ATP-dependent amidation of deamido-NAD to form NAD. Uses ammonia as a nitrogen source. The polypeptide is NH(3)-dependent NAD(+) synthetase (Vibrio vulnificus (strain CMCP6)).